A 361-amino-acid chain; its full sequence is Protein TIFY 8 (361 aa).

4 disordered regions span residues 53 to 78, 113 to 134, 190 to 232, and 268 to 361; these read NKAA…GLSS, RFSG…HPET, QTAA…RKDL, and SGGS…KEAT. Low complexity predominate over residues 56-78; it reads AKAAMTPSTASASSAGGLGGLSS. Polar residues-rich tracts occupy residues 113–127 and 208–232; these read RFSG…SHFT and SSFT…RKDL. The Tify domain occupies 232–267; that stretch reads LASSTKQMTIFYGGQAHVFDDVHPNKADVIMALAGS. Residues 333 to 361 are compositionally biased toward basic and acidic residues; the sequence is GREHQGSIISRGRDIRDPVHRSDPEKEAT.

The protein belongs to the TIFY/JAZ family. Interacts with AFPH2/NINJA. In terms of processing, ubiquitinated. Targeted for degradation by the SCF(COI1) E3 ubiquitin ligase-proteasome pathway during jasmonate signaling.

The protein localises to the nucleus. Functionally, repressor of jasmonate responses. The chain is Protein TIFY 8 from Arabidopsis thaliana (Mouse-ear cress).